Consider the following 262-residue polypeptide: tRNA pseudouridine synthase A (262 aa).

The Nucleophile role is filled by Asp-54. Residue Tyr-113 participates in substrate binding.

This sequence belongs to the tRNA pseudouridine synthase TruA family. In terms of assembly, homodimer.

The catalysed reaction is uridine(38/39/40) in tRNA = pseudouridine(38/39/40) in tRNA. Functionally, formation of pseudouridine at positions 38, 39 and 40 in the anticodon stem and loop of transfer RNAs. The protein is tRNA pseudouridine synthase A of Lactobacillus acidophilus (strain ATCC 700396 / NCK56 / N2 / NCFM).